Reading from the N-terminus, the 424-residue chain is MVSESHHEALAAPPATTVAAALPSNVTEPAAPGGGGGKEDAFSNLKKKFMNELNKIPLPPWALIAIAIVAVLLILTCCFCLCKKCLFKKKNKKKGKEKGGKNAINMKDVKDLGKTMKDQALKDDDAETGLTDGEEKEEPKEVEKLGKIQYSLDYDFQNNQLLVGIIQAAELPALDMGGTSDPYVKVFLLPDKKKKYETKVHRKTLNPVFNEQFTFKVPYSELGGKTLVMAVYDFDRFSKHDIIGEYKVAMNTVDFGHVTEEWRDLQSAEKEEQEKLGDICFSLRYVPTAGKLTVVILEAKNLKKMDVGGLSDPYVKIHLMQNGKRLKKKKTTIKKNTLNPYYNESFSFEVPFEQIQKVQIVVTVLDYDKIGKNDAIGKVFVGYNSTGAELRHWSDMLANPRRPIAQWHTLQPEEEVDAMLAVKK.

Residues 1–60 (MVSESHHEALAAPPATTVAAALPSNVTEPAAPGGGGGKEDAFSNLKKKFMNELNKIPLPP) are Vesicular-facing. Asparagine 25 is a glycosylation site (N-linked (GlcNAc...) asparagine). Residues 61 to 82 (WALIAIAIVAVLLILTCCFCLC) form a helical membrane-spanning segment. Residues cysteine 77, cysteine 78, cysteine 80, cysteine 82, and cysteine 85 are each lipidated (S-palmitoyl cysteine). Topologically, residues 83–424 (KKCLFKKKNK…EVDAMLAVKK (342 aa)) are cytoplasmic. Positions 117-142 (KDQALKDDDAETGLTDGEEKEEPKEV) are disordered. A compositionally biased stretch (acidic residues) spans 124 to 136 (DDAETGLTDGEEK). Residues 138–384 (EPKEVEKLGK…AIGKVFVGYN (247 aa)) are phospholipid binding. C2 domains lie at 144 to 263 (KLGK…EEWR) and 275 to 408 (KLGD…AQWH). Residues leucine 174, aspartate 175, aspartate 181, aspartate 233, phenylalanine 234, aspartate 235, serine 238, lysine 239, aspartate 241, aspartate 306, aspartate 312, aspartate 366, aspartate 368, and aspartate 374 each coordinate Ca(2+).

This sequence belongs to the synaptotagmin family. Homotetramer. The cofactor is Ca(2+).

The protein localises to the cytoplasmic vesicle. It is found in the secretory vesicle membrane. Its subcellular location is the secretory vesicle. It localises to the synaptic vesicle membrane. The protein resides in the chromaffin granule membrane. The protein localises to the cytoplasm. Its function is as follows. Calcium sensor that participates in triggering neurotransmitter release at the synapse. May have a regulatory role in the membrane interactions during trafficking of synaptic vesicles at the active zone of the synapse. It binds acidic phospholipids with a specificity that requires the presence of both an acidic head group and a diacyl backbone. May play a role in dendrite formation by melanocytes. The protein is Synaptotagmin-1 (SYT1) of Gallus gallus (Chicken).